Here is a 121-residue protein sequence, read N- to C-terminus: Ribosome-binding factor A (121 aa).

It belongs to the RbfA family. As to quaternary structure, monomer. Binds 30S ribosomal subunits, but not 50S ribosomal subunits or 70S ribosomes.

The protein resides in the cytoplasm. In terms of biological role, one of several proteins that assist in the late maturation steps of the functional core of the 30S ribosomal subunit. Associates with free 30S ribosomal subunits (but not with 30S subunits that are part of 70S ribosomes or polysomes). Required for efficient processing of 16S rRNA. May interact with the 5'-terminal helix region of 16S rRNA. The protein is Ribosome-binding factor A of Clostridium kluyveri (strain NBRC 12016).